A 432-amino-acid polypeptide reads, in one-letter code: Adenylosuccinate synthetase (432 aa).

GTP is bound by residues 13–19 (GDEGKGK) and 41–43 (GHT). The active-site Proton acceptor is the D14. Residues D14 and G41 each contribute to the Mg(2+) site. IMP is bound by residues 14–17 (DEGK), 39–42 (NAGH), T130, R144, Q225, T240, and R304. H42 (proton donor) is an active-site residue. 300–306 (ATTGRRR) is a binding site for substrate. GTP contacts are provided by residues R306, 332–334 (KLD), and 415–417 (STG).

It belongs to the adenylosuccinate synthetase family. As to quaternary structure, homodimer. It depends on Mg(2+) as a cofactor.

The protein resides in the cytoplasm. It carries out the reaction IMP + L-aspartate + GTP = N(6)-(1,2-dicarboxyethyl)-AMP + GDP + phosphate + 2 H(+). It participates in purine metabolism; AMP biosynthesis via de novo pathway; AMP from IMP: step 1/2. In terms of biological role, plays an important role in the de novo pathway of purine nucleotide biosynthesis. Catalyzes the first committed step in the biosynthesis of AMP from IMP. The sequence is that of Adenylosuccinate synthetase from Salmonella typhi.